The following is a 421-amino-acid chain: Gamma-glutamyl phosphate reductase (421 aa).

It belongs to the gamma-glutamyl phosphate reductase family.

It is found in the cytoplasm. The enzyme catalyses L-glutamate 5-semialdehyde + phosphate + NADP(+) = L-glutamyl 5-phosphate + NADPH + H(+). It participates in amino-acid biosynthesis; L-proline biosynthesis; L-glutamate 5-semialdehyde from L-glutamate: step 2/2. Its function is as follows. Catalyzes the NADPH-dependent reduction of L-glutamate 5-phosphate into L-glutamate 5-semialdehyde and phosphate. The product spontaneously undergoes cyclization to form 1-pyrroline-5-carboxylate. This chain is Gamma-glutamyl phosphate reductase, found in Nocardia farcinica (strain IFM 10152).